Reading from the N-terminus, the 506-residue chain is Xaa-Pro aminopeptidase 3 (506 aa).

The transit peptide at 1–31 directs the protein to the mitochondrion; it reads MPSLLSTPKLAPVLARLRGLSGCMSCLQRRY. Positions 54–79 are interaction with TNFRSF1B; sequence HPHLLRPGEVTPGLSQVEYALRRHKL. Substrate contacts are provided by Tyr-300, Asp-331, Asp-342, His-423, His-430, Glu-450, and Glu-474. Asp-331, Asp-342, and His-423 together coordinate Mn(2+). Positions 450 and 474 each coordinate Mn(2+).

Belongs to the peptidase M24B family. As to quaternary structure, homodimer. Interacts with TNFRSF1B/TNFR2 (activated) and TRAF2. The cofactor is Mn(2+). In terms of tissue distribution, expressed in brain, kidney, heart, liver, skeletal muscle and testis.

It is found in the mitochondrion. The protein localises to the cytoplasm. It carries out the reaction Release of any N-terminal amino acid, including proline, that is linked to proline, even from a dipeptide or tripeptide.. Catalyzes the removal of a penultimate prolyl residue from the N-termini of peptides, such as Leu-Pro-Ala. Also shows low activity towards peptides with Ala or Ser at the P1 position. Promotes TNFRSF1B-mediated phosphorylation of MAPK8/JNK1 and MAPK9/JNK2, suggesting a function as an adapter protein for TNFRSF1B; the effect is independent of XPNPEP3 peptidase activity. May inhibit apoptotic cell death induced via TNF-TNFRSF1B signaling. The protein is Xaa-Pro aminopeptidase 3 (Xpnpep3) of Mus musculus (Mouse).